Reading from the N-terminus, the 131-residue chain is Ribosome-binding factor A (131 aa).

The protein belongs to the RbfA family. As to quaternary structure, monomer. Binds 30S ribosomal subunits, but not 50S ribosomal subunits or 70S ribosomes.

It is found in the cytoplasm. One of several proteins that assist in the late maturation steps of the functional core of the 30S ribosomal subunit. Associates with free 30S ribosomal subunits (but not with 30S subunits that are part of 70S ribosomes or polysomes). Required for efficient processing of 16S rRNA. May interact with the 5'-terminal helix region of 16S rRNA. The polypeptide is Ribosome-binding factor A (Vibrio vulnificus (strain CMCP6)).